Consider the following 804-residue polypeptide: G-type lectin S-receptor-like serine/threonine-protein kinase At1g61500 (804 aa).

The N-terminal stretch at 1–24 (MMTRFACLHLFTMFLFTLLSGSSS) is a signal peptide. Positions 25–145 (AVITTESPLS…VSERALWQSF (121 aa)) constitute a Bulb-type lectin domain. Residues 25-427 (AVITTESPLS…ELDGNKRKKT (403 aa)) lie on the Extracellular side of the membrane. N-linked (GlcNAc...) asparagine glycans are attached at residues N54, N135, and N237. An EGF-like; atypical domain is found at 279–315 (PKKLCDFYGACGPFGLCVMSPSPMCKCFRGFVPKSVE). Intrachain disulfides connect C283–C295 and C289–C303. 3 N-linked (GlcNAc...) asparagine glycosylation sites follow: N321, N337, and N376. The PAN domain maps to 334 to 416 (CLGNSTGEDA…GELLSIRLAR (83 aa)). 2 disulfide bridges follow: C369/C390 and C373/C379. Residues 428–448 (IVASIVSLTLFMILGFTAFGV) form a helical membrane-spanning segment. Topologically, residues 449 to 804 (WRCRVEHIAH…GMTQSVILGR (356 aa)) are cytoplasmic. The region spanning 491–776 (FSLSNKLGQG…DLPSPKQPTF (286 aa)) is the Protein kinase domain. Residues 497–505 (LGQGGFGSV) and K519 each bind ATP. Residues S525 and S540 each carry the phosphoserine modification. The tract at residues 580–597 (RKRLEIDWPKRFDIIQGI) is caM-binding. Catalysis depends on D616, which acts as the Proton acceptor. Phosphoserine is present on residues S620 and S633. Residue T650 is modified to Phosphothreonine. S693 and S787 each carry phosphoserine.

The protein belongs to the protein kinase superfamily. Ser/Thr protein kinase family.

The protein resides in the cell membrane. The catalysed reaction is L-seryl-[protein] + ATP = O-phospho-L-seryl-[protein] + ADP + H(+). The enzyme catalyses L-threonyl-[protein] + ATP = O-phospho-L-threonyl-[protein] + ADP + H(+). This Arabidopsis thaliana (Mouse-ear cress) protein is G-type lectin S-receptor-like serine/threonine-protein kinase At1g61500.